Reading from the N-terminus, the 181-residue chain is MTILNYNTIGIKGKTAEEFLYRYITGERKFAVIRSVNDNKLDVMKLKVMTIYEKVIASGDAKIRTIIPVVDDSGYVDNYKLMKYKNLILRYDNLPAHAIAKTVYINAIKMGYTYNYKKRVVSLLIFTIDKLSLTLNCDTRNVVVNVVRKICNDKGFENCNDIDKSNVASKVKTYISAFAKK.

This is an uncharacterized protein from Acidianus filamentous virus 2 (isolate Italy/Pozzuoli) (AFV-2).